The chain runs to 261 residues: Cytochrome c oxidase subunit 3 (261 aa).

Residues 1–15 (MTKQMHAFHMVNPSP) are Mitochondrial matrix-facing. Residues 16–34 (WPLTGAASAFMLTSGLAMW) form a helical membrane-spanning segment. Over 35 to 40 (FHKHSN) the chain is Mitochondrial intermembrane. A helical transmembrane segment spans residues 41–66 (TLIFLSMILMLLTMYQWWRDITREGT). Over 67–72 (FQGHHT) the chain is Mitochondrial matrix. A helical transmembrane segment spans residues 73–105 (SLVQKSLRYGMILFIVSEVCFFFGFFWTFYHSS). Over 106-128 (LSPSPDLGMMWPPKGVIPLDPFE) the chain is Mitochondrial intermembrane. Residues 129-152 (IPLLNTAILLGSGVSVTWAHHSLM) form a helical membrane-spanning segment. Residues 153–155 (EKT) lie on the Mitochondrial matrix side of the membrane. The chain crosses the membrane as a helical span at residues 156-183 (HKDMVISLSITIILGIYFTLLQGMEYFN). The Mitochondrial intermembrane portion of the chain corresponds to 184 to 190 (STFNISD). The helical transmembrane segment at 191–223 (NAYGSTFFVATGFHGGHVIIGTLFLTVCLLRQL) threads the bilayer. At 224–232 (MFHFTSSHH) the chain is on the mitochondrial matrix side. The helical transmembrane segment at 233 to 256 (FGFEAAAWYWHFVDVVWLFLFISI) threads the bilayer. Over 257 to 261 (YWWGS) the chain is Mitochondrial intermembrane.

Belongs to the cytochrome c oxidase subunit 3 family. Component of the cytochrome c oxidase (complex IV, CIV), a multisubunit enzyme composed of 14 subunits. The complex is composed of a catalytic core of 3 subunits MT-CO1, MT-CO2 and MT-CO3, encoded in the mitochondrial DNA, and 11 supernumerary subunits COX4I, COX5A, COX5B, COX6A, COX6B, COX6C, COX7A, COX7B, COX7C, COX8 and NDUFA4, which are encoded in the nuclear genome. The complex exists as a monomer or a dimer and forms supercomplexes (SCs) in the inner mitochondrial membrane with NADH-ubiquinone oxidoreductase (complex I, CI) and ubiquinol-cytochrome c oxidoreductase (cytochrome b-c1 complex, complex III, CIII), resulting in different assemblies (supercomplex SCI(1)III(2)IV(1) and megacomplex MCI(2)III(2)IV(2)).

It localises to the mitochondrion inner membrane. The enzyme catalyses 4 Fe(II)-[cytochrome c] + O2 + 8 H(+)(in) = 4 Fe(III)-[cytochrome c] + 2 H2O + 4 H(+)(out). Functionally, component of the cytochrome c oxidase, the last enzyme in the mitochondrial electron transport chain which drives oxidative phosphorylation. The respiratory chain contains 3 multisubunit complexes succinate dehydrogenase (complex II, CII), ubiquinol-cytochrome c oxidoreductase (cytochrome b-c1 complex, complex III, CIII) and cytochrome c oxidase (complex IV, CIV), that cooperate to transfer electrons derived from NADH and succinate to molecular oxygen, creating an electrochemical gradient over the inner membrane that drives transmembrane transport and the ATP synthase. Cytochrome c oxidase is the component of the respiratory chain that catalyzes the reduction of oxygen to water. Electrons originating from reduced cytochrome c in the intermembrane space (IMS) are transferred via the dinuclear copper A center (CU(A)) of subunit 2 and heme A of subunit 1 to the active site in subunit 1, a binuclear center (BNC) formed by heme A3 and copper B (CU(B)). The BNC reduces molecular oxygen to 2 water molecules using 4 electrons from cytochrome c in the IMS and 4 protons from the mitochondrial matrix. The chain is Cytochrome c oxidase subunit 3 (MT-CO3) from Myxine glutinosa (Atlantic hagfish).